The following is a 686-amino-acid chain: DNA ligase (686 aa).

NAD(+) is bound by residues 33–37 (DSVYD), 82–83 (SL), and glutamate 122. The active-site N6-AMP-lysine intermediate is the lysine 124. Positions 145, 182, 300, and 324 each coordinate NAD(+). Cysteine 418, cysteine 421, cysteine 436, and cysteine 441 together coordinate Zn(2+). Residues 600–686 (AVSQILAGKK…PTVESGDLHP (87 aa)) form the BRCT domain.

It belongs to the NAD-dependent DNA ligase family. LigA subfamily. The cofactor is Mg(2+). Mn(2+) serves as cofactor.

The catalysed reaction is NAD(+) + (deoxyribonucleotide)n-3'-hydroxyl + 5'-phospho-(deoxyribonucleotide)m = (deoxyribonucleotide)n+m + AMP + beta-nicotinamide D-nucleotide.. DNA ligase that catalyzes the formation of phosphodiester linkages between 5'-phosphoryl and 3'-hydroxyl groups in double-stranded DNA using NAD as a coenzyme and as the energy source for the reaction. It is essential for DNA replication and repair of damaged DNA. This Synechococcus sp. (strain JA-2-3B'a(2-13)) (Cyanobacteria bacterium Yellowstone B-Prime) protein is DNA ligase.